The sequence spans 333 residues: Outer membrane protein assembly factor BamC (333 aa).

An N-terminal signal peptide occupies residues 1 to 18; that stretch reads MKKCLFPLSVLAVIVATG. The N-palmitoyl cysteine moiety is linked to residue C19. C19 carries the S-diacylglycerol cysteine lipid modification.

The protein belongs to the BamC family. As to quaternary structure, part of the Bam complex.

The protein resides in the cell outer membrane. Its function is as follows. Part of the outer membrane protein assembly complex, which is involved in assembly and insertion of beta-barrel proteins into the outer membrane. This chain is Outer membrane protein assembly factor BamC, found in Actinobacillus succinogenes (strain ATCC 55618 / DSM 22257 / CCUG 43843 / 130Z).